Here is a 223-residue protein sequence, read N- to C-terminus: N-terminal Xaa-Pro-Lys N-methyltransferase 1 (223 aa).

Met1 is modified (N-acetylmethionine). The residue at position 2 (Thr2) is an N-acetylthreonine; in N-terminal Xaa-Pro-Lys N-methyltransferase 1, N-terminally processed. S-adenosyl-L-methionine is bound by residues Gly69, Arg74, Asp91–Thr93, Leu119–Gln120, and Gln135.

Belongs to the methyltransferase superfamily. NTM1 family.

The protein resides in the nucleus. The catalysed reaction is N-terminal L-alanyl-L-prolyl-L-lysyl-[protein] + 3 S-adenosyl-L-methionine = N-terminal N,N,N-trimethyl-L-alanyl-L-prolyl-L-lysyl-[protein] + 3 S-adenosyl-L-homocysteine + 3 H(+). It catalyses the reaction N-terminal L-seryl-L-prolyl-L-lysyl-[protein] + 3 S-adenosyl-L-methionine = N-terminal N,N,N-trimethyl-L-seryl-L-prolyl-L-lysyl-[protein] + 3 S-adenosyl-L-homocysteine + 3 H(+). The enzyme catalyses N-terminal L-prolyl-L-prolyl-L-lysyl-[protein] + 2 S-adenosyl-L-methionine = N-terminal N,N-dimethyl-L-prolyl-L-prolyl-L-lysyl-[protein] + 2 S-adenosyl-L-homocysteine + 2 H(+). Distributive alpha-N-methyltransferase that methylates the N-terminus of target proteins containing the N-terminal motif [Ala/Gly/Pro/Ser]-Pro-Lys when the initiator Met is cleaved. Specifically catalyzes mono-, di- or tri-methylation of the exposed alpha-amino group of the Ala, Gly or Ser residue in the [Ala/Gly/Ser]-Pro-Lys motif and mono- or di-methylation of Pro in the Pro-Pro-Lys motif. Some of the substrates may be primed by NTMT2-mediated monomethylation. Catalyzes the trimethylation of the N-terminal Gly in CENPA (after removal of Met-1). Responsible for the N-terminal methylation of KLHL31, MYL2, MYL3, RB1, RCC1, RPL23A and SET. Required during mitosis for normal bipolar spindle formation and chromosome segregation via its action on RCC1. This is N-terminal Xaa-Pro-Lys N-methyltransferase 1 (NTMT1) from Homo sapiens (Human).